The sequence spans 378 residues: Ribosomal RNA large subunit methyltransferase G (378 aa).

The protein belongs to the methyltransferase superfamily. RlmG family.

It is found in the cytoplasm. The catalysed reaction is guanosine(1835) in 23S rRNA + S-adenosyl-L-methionine = N(2)-methylguanosine(1835) in 23S rRNA + S-adenosyl-L-homocysteine + H(+). In terms of biological role, specifically methylates the guanine in position 1835 (m2G1835) of 23S rRNA. The sequence is that of Ribosomal RNA large subunit methyltransferase G from Shewanella baltica (strain OS185).